Reading from the N-terminus, the 93-residue chain is Small ribosomal subunit protein uS19 (93 aa).

Belongs to the universal ribosomal protein uS19 family.

Functionally, protein S19 forms a complex with S13 that binds strongly to the 16S ribosomal RNA. The sequence is that of Small ribosomal subunit protein uS19 from Clostridium acetobutylicum (strain ATCC 824 / DSM 792 / JCM 1419 / IAM 19013 / LMG 5710 / NBRC 13948 / NRRL B-527 / VKM B-1787 / 2291 / W).